Here is a 712-residue protein sequence, read N- to C-terminus: Eukaryotic translation initiation factor 3 subunit B (712 aa).

The segment at 1 to 98 (MSLTEAEYHE…LFVQFETSEM (98 aa)) is sufficient for interaction with HCR1 and TIF32. The sufficient for interaction with PIC8 stretch occupies residues 1–224 (MSLTEAEYHE…GVQSWGGADF (224 aa)). Positions 37–124 (NYVVVDGAPI…HRLLVNRLSD (88 aa)) constitute an RRM domain. WD repeat units lie at residues 191-229 (RKFF…SIDK), 230-293 (FMHN…RTFA), 301-339 (QKEM…LLDK), 342-384 (IKID…QTAR), 452-493 (ELKE…DFYA), 513-555 (ITDK…SNKN), and 566-604 (DKFS…YEFT).

The protein belongs to the eIF-3 subunit B family. In terms of assembly, component of the eukaryotic translation initiation factor 3 (eIF-3) complex.

It is found in the cytoplasm. In terms of biological role, RNA-binding component of the eukaryotic translation initiation factor 3 (eIF-3) complex, which is involved in protein synthesis of a specialized repertoire of mRNAs and, together with other initiation factors, stimulates binding of mRNA and methionyl-tRNAi to the 40S ribosome. The eIF-3 complex specifically targets and initiates translation of a subset of mRNAs involved in cell proliferation. The sequence is that of Eukaryotic translation initiation factor 3 subunit B from Scheffersomyces stipitis (strain ATCC 58785 / CBS 6054 / NBRC 10063 / NRRL Y-11545) (Yeast).